A 1025-amino-acid polypeptide reads, in one-letter code: Protein mono-ADP-ribosyltransferase PARP10 (1025 aa).

T101 bears the Phosphothreonine mark. E106 is subject to ADP-ribosyl glutamic acid. K140 is subject to N6-(ADP-ribosyl)lysine. Positions 318-346 (GIMTTGSGQEPGQSGTSLRTGPMGSLGQA) are disordered. The span at 321-336 (TTGSGQEPGQSGTSLR) shows a compositional bias: polar residues. A phosphoserine mark is found at S378, S423, and S431. Disordered stretches follow at residues 569-589 (VLPG…DQED) and 617-644 (LEEE…APST). Over residues 617–639 (LEEEGPQEQPEEEVTPGHEEEEP) the composition is skewed to acidic residues. 2 short sequence motifs (ubiquitin-interacting) span residues 650 to 667 (LEEE…LEPQ) and 673 to 690 (QEEA…LLEQ). S663 is subject to Phosphoserine. Residues 700-907 (DGGTDGKAQL…CAHGFNRSFC (208 aa)) form a myc binding region. In terms of domain architecture, PARP catalytic spans 806–1025 (PTLAGQTLKG…SGLPGRSPDT (220 aa)). A PIP-box motif is present at residues 831–838 (QEVVRAFY). E882 is modified (ADP-ribosyl glutamic acid). K916 bears the N6-(ADP-ribosyl)lysine mark. K916 carries the post-translational modification N6-acetyllysine. The interval 1006-1025 (HVPRASPDDPSGLPGRSPDT) is disordered. At S1011 the chain carries Phosphoserine.

This sequence belongs to the ARTD/PARP family. As to quaternary structure, interacts with MYC. Interacts with PARP14. Interacts (via-PIP box and ubiquitin-interacting motifs) with PCNA. In terms of processing, stimulated through its phosphorylation by CDK2. Acquires CDK-dependent phosphorylation through late-G1 to S phase, and from prometaphase to cytokinesis in the nucleolar organizing regions. Phosphorylation is suppressed in growth-arrested cells. Post-translationally, auto-mono-ADP-ribosylated on glutamate and lysine residues. Highly expressed in spleen and thymus. Intermediate levels in liver, kidney, pancreas, prostate, testis, ovary, intestine, and leukocytes. Low expression in heart, brain, placenta, lung, skeletal muscle, and colon.

The protein resides in the nucleus. Its subcellular location is the nucleolus. It localises to the cytoplasm. The enzyme catalyses L-lysyl-[protein] + NAD(+) = N(6)-(ADP-D-ribosyl)-L-lysyl-[protein] + nicotinamide + H(+). It carries out the reaction L-aspartyl-[protein] + NAD(+) = 4-O-(ADP-D-ribosyl)-L-aspartyl-[protein] + nicotinamide. The catalysed reaction is L-glutamyl-[protein] + NAD(+) = 5-O-(ADP-D-ribosyl)-L-glutamyl-[protein] + nicotinamide. In terms of biological role, ADP-ribosyltransferase that mediates mono-ADP-ribosylation of glutamate and aspartate residues on target proteins. In contrast to PARP1 and PARP2, it is not able to mediate poly-ADP-ribosylation. Catalyzes mono-ADP-ribosylation of GSK3B, leading to negatively regulate GSK3B kinase activity. Involved in translesion DNA synthesis in response to DNA damage via its interaction with PCNA. The protein is Protein mono-ADP-ribosyltransferase PARP10 of Homo sapiens (Human).